Here is a 231-residue protein sequence, read N- to C-terminus: Orotidine 5'-phosphate decarboxylase (231 aa).

Substrate contacts are provided by residues aspartate 11, lysine 33, aspartate 60–threonine 69, threonine 120, arginine 181, glutamine 190, glycine 210, and arginine 211. Lysine 62 serves as the catalytic Proton donor.

This sequence belongs to the OMP decarboxylase family. Type 1 subfamily. As to quaternary structure, homodimer.

The enzyme catalyses orotidine 5'-phosphate + H(+) = UMP + CO2. The protein operates within pyrimidine metabolism; UMP biosynthesis via de novo pathway; UMP from orotate: step 2/2. Its function is as follows. Catalyzes the decarboxylation of orotidine 5'-monophosphate (OMP) to uridine 5'-monophosphate (UMP). The protein is Orotidine 5'-phosphate decarboxylase of Photobacterium profundum (strain SS9).